The sequence spans 288 residues: Eukaryotic translation initiation factor 3 subunit G (288 aa).

The segment at 1–35 (MSRVANNRDWADDEDLEDSNELPQSTTTTNKDGTQ) is disordered. Acidic residues predominate over residues 11–20 (ADDEDLEDSN). Residues 21–35 (ELPQSTTTTNKDGTQ) are compositionally biased toward polar residues. Positions 208–286 (ATLRVTNVSE…LILRVEFAKK (79 aa)) constitute an RRM domain.

It belongs to the eIF-3 subunit G family. As to quaternary structure, component of the eukaryotic translation initiation factor 3 (eIF-3) complex.

Its subcellular location is the cytoplasm. Its function is as follows. RNA-binding component of the eukaryotic translation initiation factor 3 (eIF-3) complex, which is involved in protein synthesis of a specialized repertoire of mRNAs and, together with other initiation factors, stimulates binding of mRNA and methionyl-tRNAi to the 40S ribosome. The eIF-3 complex specifically targets and initiates translation of a subset of mRNAs involved in cell proliferation. This subunit can bind 18S rRNA. The sequence is that of Eukaryotic translation initiation factor 3 subunit G (tif35) from Botryotinia fuckeliana (strain B05.10) (Noble rot fungus).